The sequence spans 206 residues: Thiamine-phosphate synthase (206 aa).

Residues 37–41 and N69 contribute to the 4-amino-2-methyl-5-(diphosphooxymethyl)pyrimidine site; that span reads QYRNK. Positions 70 and 89 each coordinate Mg(2+). Residue S108 coordinates 4-amino-2-methyl-5-(diphosphooxymethyl)pyrimidine. Residue 135 to 137 coordinates 2-[(2R,5Z)-2-carboxy-4-methylthiazol-5(2H)-ylidene]ethyl phosphate; sequence SST. Residue K138 coordinates 4-amino-2-methyl-5-(diphosphooxymethyl)pyrimidine. Residues G165 and 185 to 186 contribute to the 2-[(2R,5Z)-2-carboxy-4-methylthiazol-5(2H)-ylidene]ethyl phosphate site; that span reads IS.

The protein belongs to the thiamine-phosphate synthase family. Mg(2+) serves as cofactor.

It catalyses the reaction 2-[(2R,5Z)-2-carboxy-4-methylthiazol-5(2H)-ylidene]ethyl phosphate + 4-amino-2-methyl-5-(diphosphooxymethyl)pyrimidine + 2 H(+) = thiamine phosphate + CO2 + diphosphate. It carries out the reaction 2-(2-carboxy-4-methylthiazol-5-yl)ethyl phosphate + 4-amino-2-methyl-5-(diphosphooxymethyl)pyrimidine + 2 H(+) = thiamine phosphate + CO2 + diphosphate. The catalysed reaction is 4-methyl-5-(2-phosphooxyethyl)-thiazole + 4-amino-2-methyl-5-(diphosphooxymethyl)pyrimidine + H(+) = thiamine phosphate + diphosphate. It functions in the pathway cofactor biosynthesis; thiamine diphosphate biosynthesis; thiamine phosphate from 4-amino-2-methyl-5-diphosphomethylpyrimidine and 4-methyl-5-(2-phosphoethyl)-thiazole: step 1/1. Condenses 4-methyl-5-(beta-hydroxyethyl)thiazole monophosphate (THZ-P) and 2-methyl-4-amino-5-hydroxymethyl pyrimidine pyrophosphate (HMP-PP) to form thiamine monophosphate (TMP). The protein is Thiamine-phosphate synthase of Azoarcus sp. (strain BH72).